The following is a 75-amino-acid chain: Acyl carrier protein (75 aa).

Residues 1-75 (MALFDDVKEV…GDAIKFIENV (75 aa)) form the Carrier domain. S36 is modified (O-(pantetheine 4'-phosphoryl)serine).

It belongs to the acyl carrier protein (ACP) family. In terms of processing, 4'-phosphopantetheine is transferred from CoA to a specific serine of apo-ACP by AcpS. This modification is essential for activity because fatty acids are bound in thioester linkage to the sulfhydryl of the prosthetic group.

The protein localises to the cytoplasm. The protein operates within lipid metabolism; fatty acid biosynthesis. Its function is as follows. Carrier of the growing fatty acid chain in fatty acid biosynthesis. This chain is Acyl carrier protein, found in Sulfurovum sp. (strain NBC37-1).